Consider the following 695-residue polypeptide: NADPH--cytochrome P450 reductase (695 aa).

Residues 1–8 (MAQLDTLD) are Lumenal-facing. A helical transmembrane segment spans residues 9–31 (LVVLVVLLVGSAAYFTKGTYWAV). At 32–695 (PKDPYAASGP…SGSYQEDVWS (664 aa)) the chain is on the cytoplasmic side. The Flavodoxin-like domain maps to 66-221 (CVIFYGSQTG…DFLAWKEPMW (156 aa)). Residues 72 to 77 (SQTGTA), 123 to 126 (ATYG), 169 to 178 (LGNNTYEHYQ), and Asp-204 contribute to the FMN site. An FAD-binding FR-type domain is found at 277 to 538 (HNPFIAPIVE…HVRHSNFKLP (262 aa)). Residue Arg-296 coordinates NADP(+). Residues 451 to 454 (RYYS), 469 to 471 (TAV), and 486 to 489 (GVTT) each bind FAD. Residues Thr-552, 614–615 (SR), 620–624 (KVYVQ), and Glu-656 each bind NADP(+). Trp-694 provides a ligand contact to FAD.

This sequence belongs to the NADPH--cytochrome P450 reductase family. The protein in the N-terminal section; belongs to the flavodoxin family. It in the C-terminal section; belongs to the flavoprotein pyridine nucleotide cytochrome reductase family. FAD serves as cofactor. It depends on FMN as a cofactor.

Its subcellular location is the endoplasmic reticulum membrane. It localises to the mitochondrion outer membrane. It is found in the cell membrane. The catalysed reaction is 2 oxidized [cytochrome P450] + NADPH = 2 reduced [cytochrome P450] + NADP(+) + H(+). Its function is as follows. This enzyme is required for electron transfer from NADP to cytochrome P450 in microsomes. It can also provide electron transfer to heme oxygenase and cytochrome B5. Involved in ergosterol biosynthesis. The sequence is that of NADPH--cytochrome P450 reductase from Aspergillus terreus (strain NIH 2624 / FGSC A1156).